We begin with the raw amino-acid sequence, 665 residues long: RNA polymerase II-associated protein 3 (665 aa).

Threonine 2 carries the post-translational modification N-acetylthreonine. One copy of the TPR 1 repeat lies at 8–41 (IELQLQVKQNAEELQDFMRDLENWEKDIKQKDME). Positions 37-82 (QKDMELRRQNGVPEENLPPIRNGNFRKKKKGKAKESSKKTREENTK) are disordered. Residues 69 to 82 (AKESSKKTREENTK) are compositionally biased toward basic and acidic residues. A phosphoserine mark is found at serine 87, serine 116, serine 119, and serine 121. A disordered region spans residues 109–129 (DSTHESLSQESESEEDGIHVD). TPR repeat units lie at residues 133 to 166 (ALVLKEKGNKYFKQGKYDEAIDCYTKGMDADPYN), 168 to 200 (VLPTNRASAYFRLKKFAVAESDCNLAVALNRSY), 201 to 234 (TKAYSRRGAARFALQKLEEAKKDYERVLELEPNN), 282 to 315 (AISEKDRGNGFFKEGKYERAIECYTRGIAADGAN), 317 to 349 (LLPANRAMAYLKIQKYEEAEKDCTQAILLDGSY), and 350 to 383 (SKAFARRGTARTFLGKLNEAKQDFETVLLLEPGN). At serine 481 the chain carries Phosphoserine. Residue lysine 498 forms a Glycyl lysine isopeptide (Lys-Gly) (interchain with G-Cter in SUMO2) linkage.

It belongs to the RPAP3 family. Tightly associated with the RNA polymerase II complex. Component of the R2TP complex composed at least of RUVBL1, RUVBL2, RPAP3 and PIHD1. Component of the PAQosome complex which is responsible for the biogenesis of several protein complexes and which consists of R2TP complex members RUVBL1, RUVBL2, RPAP3 and PIH1D1, URI complex members PFDN2, PFDN6, PDRG1, UXT and URI1 as well as ASDURF, POLR2E and DNAAF10/WDR92. Interacts with PIH1D1. Interacts with TSC1 and TSC2. Interacts with PRPF8 and EFTUD2 in a ZNHIT2-dependent manner.

In terms of biological role, forms an interface between the RNA polymerase II enzyme and chaperone/scaffolding protein, suggesting that it is required to connect RNA polymerase II to regulators of protein complex formation. The protein is RNA polymerase II-associated protein 3 (RPAP3) of Homo sapiens (Human).